The chain runs to 171 residues: Prolyl-tRNA synthetase associated domain-containing protein 1 (171 aa).

The protein belongs to the PRORSD1 family.

The polypeptide is Prolyl-tRNA synthetase associated domain-containing protein 1 (PRORSD1) (Bos taurus (Bovine)).